The sequence spans 272 residues: Hematopoietically-expressed homeobox protein hhex (272 aa).

Positions 137–196 form a DNA-binding region, homeobox; the sequence is RKGGQVRFSNDQTIELEKKFETQKYLSPPERKRLAKMLQLSERQVKTWFQNRRAKWRRLK. A disordered region spans residues 222-272; sequence CLSAEQKSRESSLDDPTSSPTSQGNLDSEVSDDSDQEVDIEGDKGYYNCAH. Residues 250–261 are compositionally biased toward acidic residues; the sequence is EVSDDSDQEVDI.

First expressed in the dorsal endomesoderm of the gastrula stage embryo. The dorsal endomesoderm contributes to forming the embryonic liver, and expression continues in the liver throughout development. Also expressed in precursors of the developing thyroid gland, and beginning at the tailbud stage, expressed in the ventral region of the head. Also transiently expressed in the endothelial layer of developing vascular tissues of the embryo, beginning at the tailbud stages.

The protein localises to the nucleus. Functionally, recognizes the DNA sequence 5'-ATTAA-3'. Transcriptional repressor. Regulates the differentiation of both endothelial and blood cells. Probably plays a role in the proliferation of vascular endothelial cells during blood vessel development. Establishes anterior identity at two levels; acts early to enhance canonical wnt-signaling by repressing expression of tle4, and acts later to inhibit nodal-signaling by directly targeting nodal/nr1 and nodal2/nr2. May play a role in liver development. Induces heart development. The sequence is that of Hematopoietically-expressed homeobox protein hhex from Xenopus laevis (African clawed frog).